The following is a 468-amino-acid chain: ATP synthase subunit beta (468 aa).

155 to 162 (GGAGVGKT) contacts ATP.

Belongs to the ATPase alpha/beta chains family. In terms of assembly, F-type ATPases have 2 components, CF(1) - the catalytic core - and CF(0) - the membrane proton channel. CF(1) has five subunits: alpha(3), beta(3), gamma(1), delta(1), epsilon(1). CF(0) has three main subunits: a(1), b(2) and c(9-12). The alpha and beta chains form an alternating ring which encloses part of the gamma chain. CF(1) is attached to CF(0) by a central stalk formed by the gamma and epsilon chains, while a peripheral stalk is formed by the delta and b chains.

The protein resides in the cell membrane. It carries out the reaction ATP + H2O + 4 H(+)(in) = ADP + phosphate + 5 H(+)(out). Produces ATP from ADP in the presence of a proton gradient across the membrane. The catalytic sites are hosted primarily by the beta subunits. The sequence is that of ATP synthase subunit beta from Streptococcus pneumoniae (strain Taiwan19F-14).